The chain runs to 411 residues: LL-diaminopimelate aminotransferase (411 aa).

Residues tyrosine 15 and glycine 42 each coordinate substrate. Pyridoxal 5'-phosphate contacts are provided by residues tyrosine 72, 108–109 (SK), tyrosine 132, asparagine 187, tyrosine 218, and 246–248 (SFS). Residues lysine 109, tyrosine 132, and asparagine 187 each coordinate substrate. N6-(pyridoxal phosphate)lysine is present on lysine 249. Pyridoxal 5'-phosphate contacts are provided by arginine 257 and asparagine 292. Asparagine 292 and arginine 388 together coordinate substrate.

Belongs to the class-I pyridoxal-phosphate-dependent aminotransferase family. LL-diaminopimelate aminotransferase subfamily. In terms of assembly, homodimer. Requires pyridoxal 5'-phosphate as cofactor.

The enzyme catalyses (2S,6S)-2,6-diaminopimelate + 2-oxoglutarate = (S)-2,3,4,5-tetrahydrodipicolinate + L-glutamate + H2O + H(+). It functions in the pathway amino-acid biosynthesis; L-lysine biosynthesis via DAP pathway; LL-2,6-diaminopimelate from (S)-tetrahydrodipicolinate (aminotransferase route): step 1/1. In terms of biological role, involved in the synthesis of meso-diaminopimelate (m-DAP or DL-DAP), required for both lysine and peptidoglycan biosynthesis. Catalyzes the direct conversion of tetrahydrodipicolinate to LL-diaminopimelate. The sequence is that of LL-diaminopimelate aminotransferase from Synechococcus elongatus (strain ATCC 33912 / PCC 7942 / FACHB-805) (Anacystis nidulans R2).